The chain runs to 206 residues: Large ribosomal subunit protein uL4 (206 aa).

A disordered region spans residues 43–78 (ARSGNRKQKDREEVHHTTKKPWRQKGTGRARAGMSS). A compositionally biased stretch (basic and acidic residues) spans 49-58 (KQKDREEVHH). A compositionally biased stretch (basic residues) spans 59 to 70 (TTKKPWRQKGTG).

Belongs to the universal ribosomal protein uL4 family. Part of the 50S ribosomal subunit.

One of the primary rRNA binding proteins, this protein initially binds near the 5'-end of the 23S rRNA. It is important during the early stages of 50S assembly. It makes multiple contacts with different domains of the 23S rRNA in the assembled 50S subunit and ribosome. Functionally, forms part of the polypeptide exit tunnel. The sequence is that of Large ribosomal subunit protein uL4 from Janthinobacterium sp. (strain Marseille) (Minibacterium massiliensis).